Here is a 575-residue protein sequence, read N- to C-terminus: Electron transfer flavoprotein-ubiquinone oxidoreductase, mitochondrial (575 aa).

The N-terminal 33 residues, 1-33 (MQRVLRAAAAGIGHASGHRAPRWGAAAAAARWL), are a transit peptide targeting the mitochondrion. Residue 44–58 (VVVVGAGPAGLAAAI) coordinates FAD. The stretch at 82-103 (VGAHVLSGNVFEPRALDELIPK) is an intramembrane region. A ubiquinone contacts are provided by G276 and G277. Residues 343-363 (IPNPVFPGGAIIGCSAGFLNV) lie within the membrane without spanning it. Residues C520, C544, C547, and C550 each coordinate [4Fe-4S] cluster. The 4Fe-4S ferredoxin-type domain maps to 535-564 (QKLHINAQNCLHCKACDIKDPKQNIEWTVP).

This sequence belongs to the ETF-QO/FixC family. The cofactor is [4Fe-4S] cluster. FAD is required as a cofactor.

Its subcellular location is the mitochondrion inner membrane. It catalyses the reaction a ubiquinone + reduced [electron-transfer flavoprotein] = a ubiquinol + oxidized [electron-transfer flavoprotein] + H(+). Functionally, accepts electrons from ETF and reduces ubiquinone. This is Electron transfer flavoprotein-ubiquinone oxidoreductase, mitochondrial from Oryza sativa subsp. japonica (Rice).